The following is a 420-amino-acid chain: Replication factor C large subunit (420 aa).

46–53 (GVQGSGKT) provides a ligand contact to ATP.

The protein belongs to the activator 1 small subunits family. RfcL subfamily. Heteromultimer composed of small subunits (RfcS) and large subunits (RfcL).

Functionally, part of the RFC clamp loader complex which loads the PCNA sliding clamp onto DNA. This is Replication factor C large subunit from Thermoplasma volcanium (strain ATCC 51530 / DSM 4299 / JCM 9571 / NBRC 15438 / GSS1).